A 286-amino-acid polypeptide reads, in one-letter code: 4-diphosphocytidyl-2-C-methyl-D-erythritol kinase (286 aa).

Residue K11 is part of the active site. 94–104 (PMGGGIGGGSS) contributes to the ATP binding site. The active site involves D136.

Belongs to the GHMP kinase family. IspE subfamily.

The enzyme catalyses 4-CDP-2-C-methyl-D-erythritol + ATP = 4-CDP-2-C-methyl-D-erythritol 2-phosphate + ADP + H(+). It functions in the pathway isoprenoid biosynthesis; isopentenyl diphosphate biosynthesis via DXP pathway; isopentenyl diphosphate from 1-deoxy-D-xylulose 5-phosphate: step 3/6. Catalyzes the phosphorylation of the position 2 hydroxy group of 4-diphosphocytidyl-2C-methyl-D-erythritol. This chain is 4-diphosphocytidyl-2-C-methyl-D-erythritol kinase, found in Pseudomonas putida (strain GB-1).